Here is a 705-residue protein sequence, read N- to C-terminus: Ribosomal RNA large subunit methyltransferase K/L (705 aa).

Positions 42 to 154 constitute a THUMP domain; that stretch reads LAQKVCLSTR…RYGVSMYIDY (113 aa).

The protein belongs to the methyltransferase superfamily. RlmKL family.

The protein resides in the cytoplasm. The enzyme catalyses guanosine(2445) in 23S rRNA + S-adenosyl-L-methionine = N(2)-methylguanosine(2445) in 23S rRNA + S-adenosyl-L-homocysteine + H(+). It catalyses the reaction guanosine(2069) in 23S rRNA + S-adenosyl-L-methionine = N(2)-methylguanosine(2069) in 23S rRNA + S-adenosyl-L-homocysteine + H(+). Functionally, specifically methylates the guanine in position 2445 (m2G2445) and the guanine in position 2069 (m7G2069) of 23S rRNA. This is Ribosomal RNA large subunit methyltransferase K/L from Pseudoalteromonas translucida (strain TAC 125).